The sequence spans 101 residues: MAERLSEDARKAAVKALSGWSEVAGREAIARVFTFRDFNEAFGFMARVALVAEKNDHHPEWRNVYKTVEVVLATHDAGGVTERDIRLAEAMNAIARQFGVA.

The protein belongs to the pterin-4-alpha-carbinolamine dehydratase family.

The enzyme catalyses (4aS,6R)-4a-hydroxy-L-erythro-5,6,7,8-tetrahydrobiopterin = (6R)-L-erythro-6,7-dihydrobiopterin + H2O. In Nitrobacter hamburgensis (strain DSM 10229 / NCIMB 13809 / X14), this protein is Putative pterin-4-alpha-carbinolamine dehydratase.